A 1086-amino-acid chain; its full sequence is DNA polymerase delta catalytic subunit (1086 aa).

The segment at 1-64 (MTDRSSNEGV…KTSSFEDELA (64 aa)) is disordered. A compositionally biased stretch (basic and acidic residues) spans 29-58 (EITDVKRRRLSERNGYGDKKGSSSKEKTSS). Residues cysteine 993, cysteine 996, cysteine 1008, and cysteine 1011 each coordinate Zn(2+). The CysA-type zinc finger occupies 993–1011 (CLGCKAPIKKGKTALCENC). [4Fe-4S] cluster-binding residues include cysteine 1040, cysteine 1043, cysteine 1053, and cysteine 1058. Residues 1040-1058 (CQRCQGSMHQDVICTSRDC) carry the CysB motif motif.

It belongs to the DNA polymerase type-B family. In terms of assembly, heterotetramer that consist of the pol3, cdc1, cdc27 and cdm1 subunits. The pol3 subunit contains the polymerase active site and most likely the active site for the 3'-5' exonuclease activity. The cofactor is [4Fe-4S] cluster.

It localises to the nucleus. The enzyme catalyses DNA(n) + a 2'-deoxyribonucleoside 5'-triphosphate = DNA(n+1) + diphosphate. Its function is as follows. Catalytic component of DNA polymerase delta (DNA polymerase III) which participates in chromosomal DNA replication. Required during synthesis of the lagging DNA strands at the replication fork, binds at/or near replication origins and moves along DNA with the replication fork. Participates in leading strand synthesis during replication initiation and termination. Has 3'-5' proofreading exonuclease activity that corrects errors arising during DNA replication. The protein is DNA polymerase delta catalytic subunit (pol3) of Schizosaccharomyces pombe (strain 972 / ATCC 24843) (Fission yeast).